We begin with the raw amino-acid sequence, 51 residues long: UPF0391 membrane protein Mbur_2216 (51 aa).

The next 2 helical transmembrane spans lie at 1–21 (MADL…AYVL) and 31–51 (MTIA…TILL).

This sequence belongs to the UPF0391 family.

Its subcellular location is the cell membrane. In Methanococcoides burtonii (strain DSM 6242 / NBRC 107633 / OCM 468 / ACE-M), this protein is UPF0391 membrane protein Mbur_2216.